A 75-amino-acid chain; its full sequence is UPF0352 protein YejL (75 aa).

Belongs to the UPF0352 family.

The sequence is that of UPF0352 protein YejL from Shigella flexneri.